The sequence spans 346 residues: Methylthioribose-1-phosphate isomerase (346 aa).

Substrate is bound by residues 46 to 48, R89, and Q196; that span reads RGA. D237 serves as the catalytic Proton donor. Substrate is bound at residue 247-248; sequence NK.

Belongs to the eIF-2B alpha/beta/delta subunits family. MtnA subfamily.

It carries out the reaction 5-(methylsulfanyl)-alpha-D-ribose 1-phosphate = 5-(methylsulfanyl)-D-ribulose 1-phosphate. It participates in amino-acid biosynthesis; L-methionine biosynthesis via salvage pathway; L-methionine from S-methyl-5-thio-alpha-D-ribose 1-phosphate: step 1/6. Functionally, catalyzes the interconversion of methylthioribose-1-phosphate (MTR-1-P) into methylthioribulose-1-phosphate (MTRu-1-P). The polypeptide is Methylthioribose-1-phosphate isomerase (Geobacter sp. (strain M21)).